Reading from the N-terminus, the 200-residue chain is Holliday junction branch migration complex subunit RuvA (200 aa).

The domain I stretch occupies residues 1–63 (MFEYLTGLIT…EDAITLFGFA (63 aa)). Residues 64 to 142 (TQAEKRLFTQ…AVQDEVQLDF (79 aa)) are domain II. Residues 143-151 (TAPGPLGPS) are flexible linker. Positions 151–200 (SAALQDALAALESLGYTTKQVERVQKQLEGLQGELSTNDYLSQGLKLLSR) are domain III.

It belongs to the RuvA family. In terms of assembly, homotetramer. Forms an RuvA(8)-RuvB(12)-Holliday junction (HJ) complex. HJ DNA is sandwiched between 2 RuvA tetramers; dsDNA enters through RuvA and exits via RuvB. An RuvB hexamer assembles on each DNA strand where it exits the tetramer. Each RuvB hexamer is contacted by two RuvA subunits (via domain III) on 2 adjacent RuvB subunits; this complex drives branch migration. In the full resolvosome a probable DNA-RuvA(4)-RuvB(12)-RuvC(2) complex forms which resolves the HJ.

The protein localises to the cytoplasm. The RuvA-RuvB-RuvC complex processes Holliday junction (HJ) DNA during genetic recombination and DNA repair, while the RuvA-RuvB complex plays an important role in the rescue of blocked DNA replication forks via replication fork reversal (RFR). RuvA specifically binds to HJ cruciform DNA, conferring on it an open structure. The RuvB hexamer acts as an ATP-dependent pump, pulling dsDNA into and through the RuvAB complex. HJ branch migration allows RuvC to scan DNA until it finds its consensus sequence, where it cleaves and resolves the cruciform DNA. In Limosilactobacillus fermentum (strain NBRC 3956 / LMG 18251) (Lactobacillus fermentum), this protein is Holliday junction branch migration complex subunit RuvA.